The chain runs to 152 residues: Nucleoside diphosphate kinase A (152 aa).

ATP contacts are provided by K12, F60, R88, and T94. Residue K100 forms a Glycyl lysine isopeptide (Lys-Gly) (interchain with G-Cter in ubiquitin) linkage. 2 residues coordinate ATP: R105 and N115. Residue H118 is the Pros-phosphohistidine intermediate of the active site. Phosphoserine is present on residues S120, S122, and S125.

The protein belongs to the NDK family. In terms of assembly, hexamer of two different chains: An and B (A6, A5B, A4B2, A3B3, A2B4, AB5, B6). Interacts with PRUNE1. Component of the SET complex, composed of at least ANP32A, APEX1, HMGB2, NME1, SET and TREX1. Within this complex, interacts directly with SET. Also interacts with TREX1, but only following translocation to the nucleus. The cofactor is Mg(2+).

It is found in the cytoplasm. The protein localises to the nucleus. The catalysed reaction is a 2'-deoxyribonucleoside 5'-diphosphate + ATP = a 2'-deoxyribonucleoside 5'-triphosphate + ADP. It catalyses the reaction a ribonucleoside 5'-diphosphate + ATP = a ribonucleoside 5'-triphosphate + ADP. With respect to regulation, autophosphorylation at His-118 increases serine/threonine protein kinase activity of the enzyme. Interaction with the SET complex inhibits exonuclease activity. Major role in the synthesis of nucleoside triphosphates other than ATP. The ATP gamma phosphate is transferred to the NDP beta phosphate via a ping-pong mechanism, using a phosphorylated active-site intermediate. Possesses nucleoside-diphosphate kinase, serine/threonine-specific protein kinase, geranyl and farnesyl pyrophosphate kinase, histidine protein kinase and 3'-5' exonuclease activities. Involved in cell proliferation, differentiation and development, signal transduction, G protein-coupled receptor endocytosis, and gene expression. Required for neural development including neural patterning and cell fate determination. During GZMA-mediated cell death, works in concert with TREX1. NME1 nicks one strand of DNA and TREX1 removes bases from the free 3' end to enhance DNA damage and prevent DNA end reannealing and rapid repair. The polypeptide is Nucleoside diphosphate kinase A (NME1) (Canis lupus familiaris (Dog)).